The following is a 194-amino-acid chain: Mitochondrial inner membrane protease ATP23 (194 aa).

A disordered region spans residues 1–20 (MEDAAAPNSGSEFNPGARRG). Histidine 96 provides a ligand contact to Zn(2+). Residue glutamate 97 is part of the active site. Residue histidine 100 participates in Zn(2+) binding.

This sequence belongs to the peptidase M76 family.

Its subcellular location is the mitochondrion inner membrane. Its function is as follows. Has a dual role in the assembly of mitochondrial ATPase. Acts as a protease that removes the N-terminal 10 residues of mitochondrial ATPase CF(0) subunit 6 (ATP6) at the intermembrane space side. Also involved in the correct assembly of the membrane-embedded ATPase CF(0) particle, probably mediating association of ATP6 with the subunit 9 ring. This chain is Mitochondrial inner membrane protease ATP23, found in Arabidopsis thaliana (Mouse-ear cress).